The following is a 591-amino-acid chain: Aspartate--tRNA ligase (591 aa).

Position 173 (glutamate 173) interacts with L-aspartate. The segment at 197-200 (QLFK) is aspartate. Arginine 219 is a binding site for L-aspartate. Residues 219 to 221 (RDE) and glutamine 228 each bind ATP. Residue histidine 448 participates in L-aspartate binding. Position 482 (glutamate 482) interacts with ATP. An L-aspartate-binding site is contributed by arginine 489. 534-537 (GLDR) provides a ligand contact to ATP.

This sequence belongs to the class-II aminoacyl-tRNA synthetase family. Type 1 subfamily. As to quaternary structure, homodimer.

It localises to the cytoplasm. The enzyme catalyses tRNA(Asp) + L-aspartate + ATP = L-aspartyl-tRNA(Asp) + AMP + diphosphate. Its function is as follows. Catalyzes the attachment of L-aspartate to tRNA(Asp) in a two-step reaction: L-aspartate is first activated by ATP to form Asp-AMP and then transferred to the acceptor end of tRNA(Asp). This is Aspartate--tRNA ligase from Shewanella oneidensis (strain ATCC 700550 / JCM 31522 / CIP 106686 / LMG 19005 / NCIMB 14063 / MR-1).